The primary structure comprises 457 residues: Dihydrolipoyllysine-residue acetyltransferase component of pyruvate dehydrogenase complex, mitochondrial (457 aa).

The N-terminal 30 residues, 1-30 (MLSAALRRRVLAPTHSALRTGFAAHVVRHY), are a transit peptide targeting the mitochondrion. Positions 36-112 (HQVIKMPALS…PVGSPIAVLV (77 aa)) constitute a Lipoyl-binding domain. Residue Lys-77 is modified to N6-lipoyllysine. The tract at residues 129-168 (AGGDAAKPAAPKKEEKSESKSESASAPEPTPEPQQYQSQG) is disordered. The segment covering 139–149 (PKKEEKSESKS) has biased composition (basic and acidic residues). Position 148 is an N6-crotonyllysine (Lys-148). A Peripheral subunit-binding (PSBD) domain is found at 179 to 216 (NISASAKRLAREKGISIDGLKGTGKNGQITEEDVKKAI). Residues His-430 and Asp-434 contribute to the active site.

It belongs to the 2-oxoacid dehydrogenase family. As to quaternary structure, eukaryotic pyruvate dehydrogenase (PDH) complexes are organized as a core consisting of the oligomeric dihydrolipoamide acetyl-transferase (E2), around which are arranged multiple copies of pyruvate dehydrogenase (E1), dihydrolipoamide dehydrogenase (E3) and protein X (E3BP) bound by non-covalent bonds. Interacts with SIR5; the interaction is direct. (R)-lipoate is required as a cofactor. Decrotonylated at 'Lys-148' by SIR5, which inhibits the activity of the pyruvate dehydrogenase complex (PDC).

Its subcellular location is the mitochondrion matrix. The enzyme catalyses N(6)-[(R)-dihydrolipoyl]-L-lysyl-[protein] + acetyl-CoA = N(6)-[(R)-S(8)-acetyldihydrolipoyl]-L-lysyl-[protein] + CoA. The pyruvate dehydrogenase complex catalyzes the overall conversion of pyruvate to acetyl-CoA and CO(2). High pyruvate dehydrogenase complex activity is required for sufficient energy production during germination of conidia. In Fusarium oxysporum f. sp. lycopersici (strain 4287 / CBS 123668 / FGSC 9935 / NRRL 34936) (Fusarium vascular wilt of tomato), this protein is Dihydrolipoyllysine-residue acetyltransferase component of pyruvate dehydrogenase complex, mitochondrial.